A 172-amino-acid polypeptide reads, in one-letter code: Large ribosomal subunit protein uL10 (172 aa).

This sequence belongs to the universal ribosomal protein uL10 family. In terms of assembly, part of the ribosomal stalk of the 50S ribosomal subunit. The N-terminus interacts with L11 and the large rRNA to form the base of the stalk. The C-terminus forms an elongated spine to which L12 dimers bind in a sequential fashion forming a multimeric L10(L12)X complex.

Functionally, forms part of the ribosomal stalk, playing a central role in the interaction of the ribosome with GTP-bound translation factors. This is Large ribosomal subunit protein uL10 from Chlorobium chlorochromatii (strain CaD3).